The primary structure comprises 109 residues: Aquaporin-2 (109 aa).

Over 1-6 the chain is Cytoplasmic; sequence SIAFSR. The helical transmembrane segment at 7–27 threads the bilayer; it reads AVLSEFLATLLFVFFGLGSAL. Residues 28–35 lie on the Extracellular side of the membrane; sequence NWPQALPS. A helical transmembrane segment spans residues 36–54; it reads VLQIAMAFGLAIGTLVQTL. Over 55-59 the chain is Cytoplasmic; sequence GHISG. The discontinuously helical intramembrane region spans 60–69; the sequence is AHINPAVTIA. Positions 63 to 65 match the NPA 1 motif; the sequence is NPA. The Cytoplasmic segment spans residues 70 to 80; it reads CLVGCHVSFLR. Residues 81 to 102 traverse the membrane as a helical segment; sequence ALFYLAAQLLGAVAGAALLHEL. Residues 103-109 are Extracellular-facing; it reads TPPDIRG.

Belongs to the MIP/aquaporin (TC 1.A.8) family. In terms of assembly, homotetramer. In terms of processing, serine phosphorylation is necessary and sufficient for expression at the apical membrane. Endocytosis is not phosphorylation-dependent. N-glycosylated.

It localises to the apical cell membrane. The protein resides in the basolateral cell membrane. It is found in the cell membrane. The protein localises to the cytoplasmic vesicle membrane. Its subcellular location is the golgi apparatus. It localises to the trans-Golgi network membrane. The catalysed reaction is H2O(in) = H2O(out). It catalyses the reaction glycerol(in) = glycerol(out). Its function is as follows. Forms a water-specific channel that provides the plasma membranes of renal collecting duct with high permeability to water, thereby permitting water to move in the direction of an osmotic gradient. Plays an essential role in renal water homeostasis. Could also be permeable to glycerol. The chain is Aquaporin-2 from Procavia capensis habessinica (Abyssinian hyrax).